A 177-amino-acid chain; its full sequence is von Ebner gland protein 1 (177 aa).

The N-terminal stretch at 1–18 (MKALLLTFGLSLLAALQA) is a signal peptide. The cysteines at positions 80 and 172 are disulfide-linked.

The protein belongs to the calycin superfamily. Lipocalin family. Homodimer.

The protein resides in the secreted. In terms of biological role, could play a role in taste reception. Could be necessary for the concentration and delivery of sapid molecules in the gustatory system. The protein is von Ebner gland protein 1 (Vegp1) of Rattus norvegicus (Rat).